The sequence spans 386 residues: Cytotoxic granule associated RNA binding protein TIA1 (386 aa).

Methionine 1 carries the N-acetylmethionine modification. 3 consecutive RRM domains span residues 7–83 (KTLY…WATT), 106–184 (FHVF…WATR), and 214–286 (CTVY…WGKE). The disordered stretch occupies residues 355–376 (GPNYSVPPPQGQNGSMLPSQPA).

Homooligomer; homooligomerization is induced by Zn(2+). Interacts with FASTK; the interactions leads to its phosphorylation. Interacts (via RRM1 and the C-terminal glutamine-rich (Q) sequence) with SNRPC/U1-C (via N-terminus); thereby facilitating spliceosomal U1 snRNP recruitment to 5' splice sites. Post-translationally, phosphorylatedby FASTK; phosphorylation occurs after FAS ligation in FAS-mediated apoptosis and before DNA fragmentation.

The protein localises to the nucleus. Its subcellular location is the cytoplasm. It is found in the stress granule. Its function is as follows. RNA-binding protein involved in the regulation of alternative pre-RNA splicing and mRNA translation by binding to uridine-rich (U-rich) RNA sequences. Binds to U-rich sequences immediately downstream from a 5' splice sites in a uridine-rich small nuclear ribonucleoprotein (U snRNP)-dependent fashion, thereby modulating alternative pre-RNA splicing. Preferably binds to the U-rich IAS1 sequence in a U1 snRNP-dependent manner; this binding is optimal if a 5' splice site is adjacent to IAS1. Activates the use of heterologous 5' splice sites; the activation depends on the intron sequence downstream from the 5' splice site, with a preference for a downstream U-rich sequence. By interacting with SNRPC/U1-C, promotes recruitment and binding of spliceosomal U1 snRNP to 5' splice sites followed by U-rich sequences, thereby facilitating atypical 5' splice site recognition by U1 snRNP. Activates splicing of alternative exons with weak 5' splice sites followed by a U-rich stretch on its own pre-mRNA and on TIAR mRNA. Acts as a modulator of alternative splicing for the apoptotic FAS receptor, thereby promoting apoptosis. Binds to the 5' splice site region of FAS intron 5 to promote accumulation of transcripts that include exon 6 at the expense of transcripts in which exon 6 is skipped, thereby leading to the transcription of a membrane-bound apoptotic FAS receptor, which promotes apoptosis. Binds to a conserved AU-rich cis element in COL2A1 intron 2 and modulates alternative splicing of COL2A1 exon 2. Also binds to the equivalent AT-rich element in COL2A1 genomic DNA, and may thereby be involved in the regulation of transcription. Involved in the repression of mRNA translation by binding to AU-rich elements (AREs) located in mRNA 3' untranslated regions (3' UTRs), including target ARE-bearing mRNAs encoding TNF and PTGS2. Also participates in the cellular response to environmental stress, by acting downstream of the stress-induced phosphorylation of EIF2S1/EIF2A to promote the recruitment of untranslated mRNAs to cytoplasmic stress granules (SGs), leading to stress-induced translational arrest. Formation and recruitment to SGs is regulated by Zn(2+). Possesses nucleolytic activity against cytotoxic lymphocyte target cells. The sequence is that of Cytotoxic granule associated RNA binding protein TIA1 (Tia1) from Mus musculus (Mouse).